We begin with the raw amino-acid sequence, 229 residues long: Cytidylate kinase (229 aa).

10–18 contacts ATP; sequence GYSSCGKST.

Belongs to the cytidylate kinase family. Type 1 subfamily.

Its subcellular location is the cytoplasm. It catalyses the reaction CMP + ATP = CDP + ADP. The catalysed reaction is dCMP + ATP = dCDP + ADP. In Phocaeicola vulgatus (strain ATCC 8482 / DSM 1447 / JCM 5826 / CCUG 4940 / NBRC 14291 / NCTC 11154) (Bacteroides vulgatus), this protein is Cytidylate kinase.